The primary structure comprises 269 residues: Formamidopyrimidine-DNA glycosylase (269 aa).

Proline 2 serves as the catalytic Schiff-base intermediate with DNA. The active-site Proton donor is the glutamate 3. Lysine 57 functions as the Proton donor; for beta-elimination activity in the catalytic mechanism. Positions 90, 109, and 150 each coordinate DNA. An FPG-type zinc finger spans residues 235 to 269 (QVYGKAGESCPECGEAIQELKIGQRNTFYCSYCQC). Arginine 259 serves as the catalytic Proton donor; for delta-elimination activity.

It belongs to the FPG family. Monomer. Zn(2+) is required as a cofactor.

It catalyses the reaction Hydrolysis of DNA containing ring-opened 7-methylguanine residues, releasing 2,6-diamino-4-hydroxy-5-(N-methyl)formamidopyrimidine.. The catalysed reaction is 2'-deoxyribonucleotide-(2'-deoxyribose 5'-phosphate)-2'-deoxyribonucleotide-DNA = a 3'-end 2'-deoxyribonucleotide-(2,3-dehydro-2,3-deoxyribose 5'-phosphate)-DNA + a 5'-end 5'-phospho-2'-deoxyribonucleoside-DNA + H(+). In terms of biological role, involved in base excision repair of DNA damaged by oxidation or by mutagenic agents. Acts as a DNA glycosylase that recognizes and removes damaged bases. Has a preference for oxidized purines, such as 7,8-dihydro-8-oxoguanine (8-oxoG). Has AP (apurinic/apyrimidinic) lyase activity and introduces nicks in the DNA strand. Cleaves the DNA backbone by beta-delta elimination to generate a single-strand break at the site of the removed base with both 3'- and 5'-phosphates. This Vibrio vulnificus (strain YJ016) protein is Formamidopyrimidine-DNA glycosylase.